The following is a 106-amino-acid chain: Protamine (106 aa).

A disordered region spans residues 1–106 (ARAVRRRRAR…TRRRRRRARR (106 aa)).

Sperm.

The protein resides in the nucleus. It is found in the chromosome. The polypeptide is Protamine (Phorcus turbinatus (Sea snail)).